Consider the following 398-residue polypeptide: MNIHEYQAKALLKSFGAPVAEGVAIFSADEAEAAAKQLPGPLYVVKSQIHAGGRGKGKFKELGPDAKGGVRLAFSIDEVKSHVAEMLGNTLVTNQTGPAGKQVNRLYIEDGADIERELYLSLLVDRAVGQVAFVVSTEGGMDIETVAHDTPEKIISVAIDPEAGVTAANLEALTAALLLEGEAKADAEKLFPILYKAFVEKDMALLEVNPLIVMKNGRMRVLDAKMSFDGNALFRHEDVVALRDKTEEDAKEIEASKYDLAYVALDGNIGCMVNGAGLAMATMDIIKLYGAEPANFLDVGGGATKEKVTAAFKIITADPAVKGILVNIFGGIMKCDVIAEGVLAAVKDVGLTVPLVVRLEGTNVELGKKIINESGLNVISADDLDDAAQKIVAAVKAA.

Positions 9–254 (KALLKSFGAP…KTEEDAKEIE (246 aa)) constitute an ATP-grasp domain. ATP is bound by residues lysine 46, 53 to 55 (GRG), glutamate 109, alanine 112, and glutamate 117. 2 residues coordinate Mg(2+): asparagine 209 and aspartate 223. Residues asparagine 274 and 331-333 (GIM) contribute to the substrate site.

The protein belongs to the succinate/malate CoA ligase beta subunit family. In terms of assembly, heterotetramer of two alpha and two beta subunits. The cofactor is Mg(2+).

It carries out the reaction succinate + ATP + CoA = succinyl-CoA + ADP + phosphate. The catalysed reaction is GTP + succinate + CoA = succinyl-CoA + GDP + phosphate. It participates in carbohydrate metabolism; tricarboxylic acid cycle; succinate from succinyl-CoA (ligase route): step 1/1. Its function is as follows. Succinyl-CoA synthetase functions in the citric acid cycle (TCA), coupling the hydrolysis of succinyl-CoA to the synthesis of either ATP or GTP and thus represents the only step of substrate-level phosphorylation in the TCA. The beta subunit provides nucleotide specificity of the enzyme and binds the substrate succinate, while the binding sites for coenzyme A and phosphate are found in the alpha subunit. This chain is Succinate--CoA ligase [ADP-forming] subunit beta, found in Allorhizobium ampelinum (strain ATCC BAA-846 / DSM 112012 / S4) (Agrobacterium vitis (strain S4)).